The primary structure comprises 611 residues: Dihydroxy-acid dehydratase (611 aa).

D81 is a binding site for Mg(2+). C122 contacts [2Fe-2S] cluster. Mg(2+) contacts are provided by D123 and K124. K124 carries the N6-carboxylysine modification. C195 lines the [2Fe-2S] cluster pocket. E491 lines the Mg(2+) pocket. S517 (proton acceptor) is an active-site residue.

Belongs to the IlvD/Edd family. As to quaternary structure, homodimer. [2Fe-2S] cluster serves as cofactor. Requires Mg(2+) as cofactor.

It carries out the reaction (2R)-2,3-dihydroxy-3-methylbutanoate = 3-methyl-2-oxobutanoate + H2O. It catalyses the reaction (2R,3R)-2,3-dihydroxy-3-methylpentanoate = (S)-3-methyl-2-oxopentanoate + H2O. It functions in the pathway amino-acid biosynthesis; L-isoleucine biosynthesis; L-isoleucine from 2-oxobutanoate: step 3/4. Its pathway is amino-acid biosynthesis; L-valine biosynthesis; L-valine from pyruvate: step 3/4. In terms of biological role, functions in the biosynthesis of branched-chain amino acids. Catalyzes the dehydration of (2R,3R)-2,3-dihydroxy-3-methylpentanoate (2,3-dihydroxy-3-methylvalerate) into 2-oxo-3-methylpentanoate (2-oxo-3-methylvalerate) and of (2R)-2,3-dihydroxy-3-methylbutanoate (2,3-dihydroxyisovalerate) into 2-oxo-3-methylbutanoate (2-oxoisovalerate), the penultimate precursor to L-isoleucine and L-valine, respectively. This chain is Dihydroxy-acid dehydratase, found in Brucella abortus (strain S19).